Here is a 161-residue protein sequence, read N- to C-terminus: uncharacterized protein (161 aa).

Residues 1 to 16 are compositionally biased toward low complexity; the sequence is MPRAGRAPAEGGPAPG. 3 disordered regions span residues 1-23, 50-91, and 140-161; these read MPRAGRAPAEGGPAPGTRSSRCL, GRPV…TQSA, and RGPACGSTAQWPPRGDPTWRIS.

This is an uncharacterized protein from Homo sapiens (Human).